The sequence spans 1517 residues: uncharacterized protein (1517 aa).

Polar residues predominate over residues 1–13; it reads MNQFPNQPGNFGQ. A disordered region spans residues 1-26; it reads MNQFPNQPGNFGQNYYKPVQGSIPAN. N-linked (GlcNAc...) asparagine glycans are attached at residues Asn-35, Asn-40, and Asn-76. The next 5 membrane-spanning stretches (helical) occupy residues 231-251, 397-417, 510-530, 612-632, and 720-740; these read AIDF…AVPI, AIGL…TVWC, FVPL…KDWI, PNIV…FFAL, and VFDC…VVLL. Asn-917 carries N-linked (GlcNAc...) asparagine glycosylation. A run of 4 helical transmembrane segments spans residues 956–976, 985–1005, 1051–1071, and 1114–1134; these read FVYA…VPPL, VPAF…VNSE, VKLD…AFWS, and GIGF…TYLL. Residue Asn-1178 is glycosylated (N-linked (GlcNAc...) asparagine). A helical transmembrane segment spans residues 1261 to 1281; the sequence is PYALPLLDSGMVPVSTQLAIV. The N-linked (GlcNAc...) asparagine glycan is linked to Asn-1321. A run of 2 helical transmembrane segments spans residues 1353–1373 and 1408–1428; these read APVV…TFEV and VVVV…PVVI.

It to S.pombe SpAC22F3.04.

The protein localises to the membrane. This is an uncharacterized protein from Schizosaccharomyces pombe (strain 972 / ATCC 24843) (Fission yeast).